The primary structure comprises 119 residues: NADH-quinone oxidoreductase subunit A (119 aa).

The next 3 helical transmembrane spans lie at 7 to 27, 63 to 83, and 88 to 108; these read YPVL…VSIG, LVAI…PWGV, and IGWP…LGFA.

This sequence belongs to the complex I subunit 3 family. In terms of assembly, NDH-1 is composed of 14 different subunits. Subunits NuoA, H, J, K, L, M, N constitute the membrane sector of the complex.

It is found in the cell inner membrane. The catalysed reaction is a quinone + NADH + 5 H(+)(in) = a quinol + NAD(+) + 4 H(+)(out). Functionally, NDH-1 shuttles electrons from NADH, via FMN and iron-sulfur (Fe-S) centers, to quinones in the respiratory chain. The immediate electron acceptor for the enzyme in this species is believed to be ubiquinone. Couples the redox reaction to proton translocation (for every two electrons transferred, four hydrogen ions are translocated across the cytoplasmic membrane), and thus conserves the redox energy in a proton gradient. This is NADH-quinone oxidoreductase subunit A from Burkholderia vietnamiensis (strain G4 / LMG 22486) (Burkholderia cepacia (strain R1808)).